The primary structure comprises 194 residues: Pyridoxal 5'-phosphate synthase subunit PdxT (194 aa).

54–56 (GES) provides a ligand contact to L-glutamine. The active-site Nucleophile is the Cys83. Residues Arg110 and 139 to 140 (IR) contribute to the L-glutamine site. Residues His175 and Glu177 each act as charge relay system in the active site.

The protein belongs to the glutaminase PdxT/SNO family. In the presence of PdxS, forms a dodecamer of heterodimers. Only shows activity in the heterodimer.

The catalysed reaction is aldehydo-D-ribose 5-phosphate + D-glyceraldehyde 3-phosphate + L-glutamine = pyridoxal 5'-phosphate + L-glutamate + phosphate + 3 H2O + H(+). It catalyses the reaction L-glutamine + H2O = L-glutamate + NH4(+). Its pathway is cofactor biosynthesis; pyridoxal 5'-phosphate biosynthesis. Functionally, catalyzes the hydrolysis of glutamine to glutamate and ammonia as part of the biosynthesis of pyridoxal 5'-phosphate. The resulting ammonia molecule is channeled to the active site of PdxS. The protein is Pyridoxal 5'-phosphate synthase subunit PdxT of Methanoregula boonei (strain DSM 21154 / JCM 14090 / 6A8).